The primary structure comprises 404 residues: MILTSFGDDMWLLTTLLLWVPVGGEVVNATKAVITLQPPWVSIFQKENVTLWCEGPHLPGDSSTQWFINGTAVQISTPSYSIPEASFQDSGEYRCQIGSSMPSDPVQLQIHNDWLLLQASRRVLTEGEPLALRCHGWKNKLVYNVVFYRNGKSFQFSSDSEVAILKTNLSHSGIYHCSGTGRHRYTSAGVSITVKELFTTPVLRASVSSPFPEGSLVTLNCETNLLLQRPGLQLHFSFYVGSKILEYRNTSSEYHIARAEREDAGFYWCEVATEDSSVLKRSPELELQVLGPQSSAPVWFHILFYLSVGIMFSLNTVLYVKIHRLQREKKYNLEVPLVSEQGKKANSFQQVRSDGVYEEVTATASQTTPKEAPDGPRSSVGDCGPEQPEPLPPSDSTGAQTSQS.

Residues 1 to 24 (MILTSFGDDMWLLTTLLLWVPVGG) form the signal peptide. The Extracellular segment spans residues 25 to 297 (EVVNATKAVI…QVLGPQSSAP (273 aa)). N-linked (GlcNAc...) asparagine glycosylation is found at Asn-28, Asn-48, Asn-69, Asn-168, and Asn-249. 3 consecutive Ig-like C2-type domains span residues 32-111 (AVIT…LQIH), 117-194 (LQAS…SITV), and 201-286 (PVLR…PELE). Disulfide bonds link Cys-53–Cys-95, Cys-134–Cys-177, and Cys-221–Cys-269. The chain crosses the membrane as a helical span at residues 298–320 (VWFHILFYLSVGIMFSLNTVLYV). An interaction with EPB41L2 region spans residues 321 to 342 (KIHRLQREKKYNLEVPLVSEQG). The Cytoplasmic segment spans residues 321 to 404 (KIHRLQREKK…DSTGAQTSQS (84 aa)). Residues 346–404 (NSFQQVRSDGVYEEVTATASQTTPKEAPDGPRSSVGDCGPEQPEPLPPSDSTGAQTSQS) are disordered. Ser-347 is subject to Phosphoserine. Thr-368 bears the Phosphothreonine mark. Residues 394–404 (SDSTGAQTSQS) show a composition bias toward polar residues.

The protein belongs to the immunoglobulin superfamily. FCGR1 family. As to quaternary structure, interacts with FCERG1; forms a functional signaling complex. Interacts with FLNA; prevents FCGR1A degradation. Interacts with EPB41L2, LAT and PPL. Interacts with HCK and LYN. N-glycosylated. In terms of processing, phosphorylated on serine residues. In terms of tissue distribution, macrophage-specific.

The protein localises to the cell membrane. Functionally, high affinity receptor for the Fc region of immunoglobulins gamma. Functions in both innate and adaptive immune responses. This chain is High affinity immunoglobulin gamma Fc receptor I (Fcgr1), found in Mus musculus (Mouse).